The sequence spans 342 residues: Methionyl-tRNA formyltransferase (342 aa).

Serine 108 to proline 111 is a binding site for (6S)-5,6,7,8-tetrahydrofolate.

Belongs to the Fmt family.

It catalyses the reaction L-methionyl-tRNA(fMet) + (6R)-10-formyltetrahydrofolate = N-formyl-L-methionyl-tRNA(fMet) + (6S)-5,6,7,8-tetrahydrofolate + H(+). Attaches a formyl group to the free amino group of methionyl-tRNA(fMet). The formyl group appears to play a dual role in the initiator identity of N-formylmethionyl-tRNA by promoting its recognition by IF2 and preventing the misappropriation of this tRNA by the elongation apparatus. The chain is Methionyl-tRNA formyltransferase from Prochlorococcus marinus (strain MIT 9313).